The primary structure comprises 701 residues: Arachidonate 12-lipoxygenase, 12R-type (701 aa).

One can recognise a PLAT domain in the interval 2–119 (ATYKVKVATG…TLALREATGK (118 aa)). Residues 120-701 (ITADDTLPIL…PVLIENSISI (582 aa)) form the Lipoxygenase domain. Fe cation-binding residues include His-398, His-403, His-578, Asn-582, and Ile-701.

The protein belongs to the lipoxygenase family. The cofactor is Fe cation. In terms of tissue distribution, expressed in skin epidermis and other stratified epithelia including tongue and forestomach. Low levels of expression are found in trachea, brain and lung. Not expressed in intestine, liver, kidney, adipose tissue, muscle or hematopoietic cells.

The protein resides in the cytoplasm. It localises to the perinuclear region. The enzyme catalyses 1-O-methyl-(5Z,8Z,11Z,14Z)-eicosatetraenoate + O2 = 1-O-methyl (5Z,8Z,10E,12R,14Z)-hydroperoxyiecosatetraenoate. It catalyses the reaction 1-O-methyl-(5Z,8Z,11Z,14Z)-eicosatetraenoate + O2 = 1-O-methyl-8-hydroperoxy-(5Z,9E,11Z,14Z)-eicosatetraenoate. It carries out the reaction (5Z,8Z,11Z,14Z)-eicosatetraenoate + O2 = (12R)-hydroperoxy-(5Z,8Z,10E,14Z)-eicosatetraenoate. The catalysed reaction is N-[omega-(9Z,12Z)-octadecadienoyloxy]acyl-beta-D-glucosyl-(1&lt;-&gt;1)-octadecasphing-4E-enine + O2 = N-[omega-(9R)-hydroperoxy-(10E,12Z)-octadecadienoyloxy]acyl-beta-D-glucosyl-(1&lt;-&gt;1)-octadecasphing-4E-enine. The enzyme catalyses a N-[omega-(9Z,12Z)-octadecadienoyloxy]-acylsphin-4E-enine + O2 = a N-[omega-(9R)-hydroperoxy-(10E,12Z)-octadecadienoyloxy]-acylsphin-4E-enine. It catalyses the reaction (6Z,9Z,12Z)-octadecatrienoate + O2 = 10-hydroperoxy-(6Z,8E,12Z)-octadecatrienoate. It carries out the reaction (4Z,7Z,10Z,13Z,16Z,19Z)-docosahexaenoate + O2 = 14-hydroperoxy-(4Z,7Z,10Z,12E,16Z,19Z)-docosahexaenoate. The catalysed reaction is (8Z,11Z,14Z)-eicosatrienoate + O2 = (8Z,10E,14Z)-12-hydroperoxyeicosatrienoate. The enzyme catalyses (5Z,8Z,11Z,14Z,17Z)-eicosapentaenoate + O2 = (5Z,7Z,8Z,10E,14Z,17Z)-12-hydroperoxyeicosapentaenoate. It catalyses the reaction (6Z,9Z,12Z)-octadecatrienoate + O2 = 10R-hydroperoxy-(6Z,8E,12Z)-octadecatrienoate. It carries out the reaction 1-O-methyl-(5Z,8Z,11Z,14Z)-eicosatetraenoate + O2 = 1-O-methyl-(8R)-hydroperoxy-(5Z,9E,11Z,14Z)-eicosatrienoate. The catalysed reaction is 1-O-methyl-(9Z,12Z)-octadecadienoate + O2 = 1-O-methyl-(9R)-hydroperoxy-(10E,12Z)-octadecadienoate. The enzyme catalyses 1-O-methyl-20-hydroxy-(5Z,8Z,11Z,14Z)-eicosatetraenoate + O2 = 1-O-methyl-8-hydroperoxy-20-hydroxy-(5Z,9E,11Z,14Z)-eicosatetraenoate. It catalyses the reaction 1-O-methyl-20-hydroxy-(5Z,8Z,11Z,14Z)-eicosatetraenoate + O2 = 1-O-methyl-12-hydroperoxy-20-hydroxy-(5Z,8Z,10E,14Z)-eicosatetraenoate. It carries out the reaction 1-O-methyl-20-hydroxy-(5Z,8Z,11Z,14Z)-eicosatetraenoate + O2 = 1-O-methyl-9-hydroperoxy-20-hydroxy-(5Z,7E,11Z,14Z)-eicosatetraenoate. The catalysed reaction is 1-O-methyl-(9Z,12Z)-octadecadienoate + O2 = 1-O-methyl-(13S)-hydroperoxy-(9Z,11E)-octadecadienoate. It functions in the pathway lipid metabolism; hydroperoxy eicosatetraenoic acid biosynthesis. The protein operates within lipid metabolism; sphingolipid metabolism. With respect to regulation, increased by calcium. Catalyzes the regio and stereo-specific incorporation of a single molecule of dioxygen into free and esterified polyunsaturated fatty acids generating lipid hydroperoxides that can be further reduced to the corresponding hydroxy species. Does not convert arachidonic acid to (12R)-hydroperoxyeicosatetraenoic acid/(12R)-HPETE. In the skin, acts upstream of ALOXE3 on the lineolate moiety of esterified omega-hydroxyacyl-sphingosine (EOS) ceramides to produce an epoxy-ketone derivative, a crucial step in the conjugation of omega-hydroxyceramide to membrane proteins. Therefore plays a crucial role in the synthesis of corneocytes lipid envelope and the establishment of the skin barrier to water loss. May also play a role in the regulation of the expression of airway mucins. This is Arachidonate 12-lipoxygenase, 12R-type from Mus musculus (Mouse).